A 79-amino-acid chain; its full sequence is Small ribosomal subunit protein bS21A (79 aa).

The tract at residues Leu-57–Arg-79 is disordered.

It belongs to the bacterial ribosomal protein bS21 family.

The sequence is that of Small ribosomal subunit protein bS21A from Rhizobium johnstonii (strain DSM 114642 / LMG 32736 / 3841) (Rhizobium leguminosarum bv. viciae).